The chain runs to 195 residues: Probable nicotinate-nucleotide adenylyltransferase (195 aa).

The protein belongs to the NadD family.

The enzyme catalyses nicotinate beta-D-ribonucleotide + ATP + H(+) = deamido-NAD(+) + diphosphate. It functions in the pathway cofactor biosynthesis; NAD(+) biosynthesis; deamido-NAD(+) from nicotinate D-ribonucleotide: step 1/1. Its function is as follows. Catalyzes the reversible adenylation of nicotinate mononucleotide (NaMN) to nicotinic acid adenine dinucleotide (NaAD). The protein is Probable nicotinate-nucleotide adenylyltransferase of Gluconobacter oxydans (strain 621H) (Gluconobacter suboxydans).